A 670-amino-acid chain; its full sequence is Mannosyl-oligosaccharide alpha-1,2-mannosidase IA (670 aa).

The Cytoplasmic segment spans residues 1–30 (MTGILPTYQRFVNGVPVPSISRRSFRLREK). The chain crosses the membrane as a helical; Signal-anchor for type II membrane protein span at residues 31-51 (YLIVSVLLTFGIVWLGALFYL). Residues 52-670 (PEFKSSNSVN…EPAHAQNNRI (619 aa)) are Lumenal-facing. Asn61 carries N-linked (GlcNAc...) asparagine glycosylation. The interval 135–177 (DVAPSVSSSRGPSKPPVDAIEEPAVGNNAANKDVSPSGPKAES) is disordered. A disulfide bond links Cys480 and Cys512. Glu526 acts as the Proton donor in catalysis. Thr637 is a binding site for Ca(2+).

This sequence belongs to the glycosyl hydrolase 47 family. Requires Ca(2+) as cofactor. N-glycosylated. Contains high mannose-type oligosaccharides.

The protein localises to the golgi apparatus membrane. It carries out the reaction N(4)-(alpha-D-Man-(1-&gt;2)-alpha-D-Man-(1-&gt;2)-alpha-D-Man-(1-&gt;3)-[alpha-D-Man-(1-&gt;2)-alpha-D-Man-(1-&gt;3)-[alpha-D-Man-(1-&gt;2)-alpha-D-Man-(1-&gt;6)]-alpha-D-Man-(1-&gt;6)]-beta-D-Man-(1-&gt;4)-beta-D-GlcNAc-(1-&gt;4)-beta-D-GlcNAc)-L-asparaginyl-[protein] (N-glucan mannose isomer 9A1,2,3B1,2,3) + 4 H2O = N(4)-(alpha-D-Man-(1-&gt;3)-[alpha-D-Man-(1-&gt;3)-[alpha-D-Man-(1-&gt;6)]-alpha-D-Man-(1-&gt;6)]-beta-D-Man-(1-&gt;4)-beta-D-GlcNAc-(1-&gt;4)-beta-D-GlcNAc)-L-asparaginyl-[protein] (N-glucan mannose isomer 5A1,2) + 4 beta-D-mannose. It catalyses the reaction N(4)-(alpha-D-Man-(1-&gt;2)-alpha-D-Man-(1-&gt;2)-alpha-D-Man-(1-&gt;3)-[alpha-D-Man-(1-&gt;3)-[alpha-D-Man-(1-&gt;2)-alpha-D-Man-(1-&gt;6)]-alpha-D-Man-(1-&gt;6)]-beta-D-Man-(1-&gt;4)-beta-D-GlcNAc-(1-&gt;4)-beta-D-GlcNAc)-L-asparaginyl-[protein] (N-glucan mannose isomer 8A1,2,3B1,3) + 3 H2O = N(4)-(alpha-D-Man-(1-&gt;3)-[alpha-D-Man-(1-&gt;3)-[alpha-D-Man-(1-&gt;6)]-alpha-D-Man-(1-&gt;6)]-beta-D-Man-(1-&gt;4)-beta-D-GlcNAc-(1-&gt;4)-beta-D-GlcNAc)-L-asparaginyl-[protein] (N-glucan mannose isomer 5A1,2) + 3 beta-D-mannose. Its pathway is protein modification; protein glycosylation. Strongly inhibited by 1-deoxymannojirimycin, an inhibitor of class I alpha-mannosidases, and by EDTA. EDTA inhibition is reversed by the addition of calcium, but not of magnesium. Functionally, involved in the maturation of Asn-linked oligosaccharides. Converts Man(9)GlcNAc(2) to Man(5)GlcNAc(2) primarily through the Man(7)GlcNAc(2) isomer C processing intermediate. The polypeptide is Mannosyl-oligosaccharide alpha-1,2-mannosidase IA (Spodoptera frugiperda (Fall armyworm)).